A 212-amino-acid chain; its full sequence is Phosphatidylserine decarboxylase proenzyme (212 aa).

Catalysis depends on S182, which acts as the Schiff-base intermediate with substrate; via pyruvic acid. The residue at position 182 (S182) is a Pyruvic acid (Ser); by autocatalysis.

It belongs to the phosphatidylserine decarboxylase family. PSD-A subfamily. As to quaternary structure, heterodimer of a large membrane-associated beta subunit and a small pyruvoyl-containing alpha subunit. The cofactor is pyruvate. Post-translationally, is synthesized initially as an inactive proenzyme. Formation of the active enzyme involves a self-maturation process in which the active site pyruvoyl group is generated from an internal serine residue via an autocatalytic post-translational modification. Two non-identical subunits are generated from the proenzyme in this reaction, and the pyruvate is formed at the N-terminus of the alpha chain, which is derived from the carboxyl end of the proenzyme. The post-translation cleavage follows an unusual pathway, termed non-hydrolytic serinolysis, in which the side chain hydroxyl group of the serine supplies its oxygen atom to form the C-terminus of the beta chain, while the remainder of the serine residue undergoes an oxidative deamination to produce ammonia and the pyruvoyl prosthetic group on the alpha chain.

The protein localises to the cell membrane. It catalyses the reaction a 1,2-diacyl-sn-glycero-3-phospho-L-serine + H(+) = a 1,2-diacyl-sn-glycero-3-phosphoethanolamine + CO2. It functions in the pathway phospholipid metabolism; phosphatidylethanolamine biosynthesis; phosphatidylethanolamine from CDP-diacylglycerol: step 2/2. Catalyzes the formation of phosphatidylethanolamine (PtdEtn) from phosphatidylserine (PtdSer). The polypeptide is Phosphatidylserine decarboxylase proenzyme (Chlorobium chlorochromatii (strain CaD3)).